Reading from the N-terminus, the 196-residue chain is Ribosome maturation factor RimP (196 aa).

A disordered region spans residues 163 to 196 (GLAPSKPTGPAPKRPKPNTNSSSNEPAAKKPRAE).

The protein belongs to the RimP family.

The protein resides in the cytoplasm. Required for maturation of 30S ribosomal subunits. This Stenotrophomonas maltophilia (strain K279a) protein is Ribosome maturation factor RimP.